The following is a 302-amino-acid chain: N-acetylmuramic acid 6-phosphate etherase (302 aa).

Positions I57–K220 constitute an SIS domain. E85 serves as the catalytic Proton donor. Residue E116 is part of the active site.

This sequence belongs to the GCKR-like family. MurNAc-6-P etherase subfamily. Homodimer.

The enzyme catalyses N-acetyl-D-muramate 6-phosphate + H2O = N-acetyl-D-glucosamine 6-phosphate + (R)-lactate. It functions in the pathway amino-sugar metabolism; N-acetylmuramate degradation. Functionally, specifically catalyzes the cleavage of the D-lactyl ether substituent of MurNAc 6-phosphate, producing GlcNAc 6-phosphate and D-lactate. The protein is N-acetylmuramic acid 6-phosphate etherase of Rhodopirellula baltica (strain DSM 10527 / NCIMB 13988 / SH1).